Reading from the N-terminus, the 706-residue chain is Termination factor NPH-I homolog (706 aa).

In terms of domain architecture, Helicase ATP-binding spans 62-227; that stretch reads IGQGENTRGL…VPCFNMLSGR (166 aa). 75–82 provides a ligand contact to ATP; it reads HQMGMGKT. Residues 168–171 carry the DEAH box motif; that stretch reads DEAH. The region spanning 378 to 599 is the Helicase C-terminal domain; sequence KIVCMLKNIK…HLNSAFRDLL (222 aa).

Belongs to the DEAD box helicase family. DEAH subfamily. As to quaternary structure, part of the viral DNA-directed RNA polymerase that consists of 8 polII-like subunits (RPB1, RPB2, RPB3, RPB5, RPB6, RPB7, RPB9, RPB10), a capping enzyme and a termination factor.

The protein localises to the virion. Putative DNA-dependent ATPase required for providing the needed energy to achieve the termination of early transcripts. The chain is Termination factor NPH-I homolog from African swine fever virus (isolate Pig/Kenya/KEN-50/1950) (ASFV).